Here is a 234-residue protein sequence, read N- to C-terminus: Endonuclease V (234 aa).

Positions 36 and 104 each coordinate Mg(2+).

Belongs to the endonuclease V family. Mg(2+) is required as a cofactor.

Its subcellular location is the cytoplasm. The enzyme catalyses Endonucleolytic cleavage at apurinic or apyrimidinic sites to products with a 5'-phosphate.. In terms of biological role, DNA repair enzyme involved in the repair of deaminated bases. Selectively cleaves double-stranded DNA at the second phosphodiester bond 3' to a deoxyinosine leaving behind the intact lesion on the nicked DNA. In Yersinia pestis, this protein is Endonuclease V.